The chain runs to 419 residues: UDP-N-acetylglucosamine 1-carboxyvinyltransferase (419 aa).

Phosphoenolpyruvate is bound at residue Lys-22–Asn-23. Arg-91 is a UDP-N-acetyl-alpha-D-glucosamine binding site. The active-site Proton donor is the Cys-115. Residue Cys-115 is modified to 2-(S-cysteinyl)pyruvic acid O-phosphothioketal. Residues Arg-120–Leu-124, Lys-160–Val-163, Asp-305, and Val-327 each bind UDP-N-acetyl-alpha-D-glucosamine.

This sequence belongs to the EPSP synthase family. MurA subfamily.

It localises to the cytoplasm. It carries out the reaction phosphoenolpyruvate + UDP-N-acetyl-alpha-D-glucosamine = UDP-N-acetyl-3-O-(1-carboxyvinyl)-alpha-D-glucosamine + phosphate. It functions in the pathway cell wall biogenesis; peptidoglycan biosynthesis. Its function is as follows. Cell wall formation. Adds enolpyruvyl to UDP-N-acetylglucosamine. The polypeptide is UDP-N-acetylglucosamine 1-carboxyvinyltransferase (Shigella boydii serotype 18 (strain CDC 3083-94 / BS512)).